The primary structure comprises 745 residues: Immunoglobulin superfamily containing leucine-rich repeat protein 2 (745 aa).

An N-terminal signal peptide occupies residues M1 to G18. The 33-residue stretch at S19–A51 folds into the LRRNT domain. The Extracellular portion of the chain corresponds to S19–S589. N-linked (GlcNAc...) asparagine glycosylation occurs at N52. LRR repeat units follow at residues N52–D73, Q76–V97, Q100–S123, A124–A145, and D148–A169. N121 is a glycosylation site (N-linked (GlcNAc...) asparagine). In terms of domain architecture, LRRCT spans N181–P232. The 139-residue stretch at P233–A371 folds into the Ig-like domain. C260 and C355 are disulfide-bonded. The tract at residues V287–P326 is disordered. A compositionally biased stretch (acidic residues) spans G290–G306. 2 N-linked (GlcNAc...) asparagine glycosylation sites follow: N337 and N364. The segment at T375–R466 is disordered. Over residues T431–I449 the composition is skewed to acidic residues. N-linked (GlcNAc...) asparagine glycosylation is found at N474 and N563. A helical transmembrane segment spans residues L590–G610. Residues A611 to G745 are Cytoplasmic-facing. Residues K656–R722 are disordered. The span at G665 to Q683 shows a compositional bias: acidic residues. Y719 carries the phosphotyrosine modification. Phosphoserine is present on S720.

As to quaternary structure, homomultimer. Interacts with NTRK1/TrkA.

The protein localises to the cell membrane. Required for axon extension during neural development. The polypeptide is Immunoglobulin superfamily containing leucine-rich repeat protein 2 (ISLR2) (Homo sapiens (Human)).